Reading from the N-terminus, the 407-residue chain is MTQLISVNSRSYRLSSAPTIVICVDGCEQEYINQAIQAGQAPFLAELTGFGTVLTGDCVVPSFTNPNNLSIVTGAPPSVHGICGNFFFDQETQEEVLMNDAKYLRAPTILAEMAKAGQLVAVVTAKDKLRNLLGHQLKGICFSAEKADQVNLEEHGVENILARVGMPVPSVYSADLSEFVFAAGLSLLTNERPDFMYLSTTDYVQHKHAPGTPEANAFYAMMDSYFKRYHEQGAIVAITADHGMNAKTDAIGRPNILFLQDLLDAQYGAQRTRVLLPITDPYVVHHGALGSYATVYLRDAVPQRDAIDFLAGIAGVEAVLTRSQACQRFELPEDRIGDLVVLGERLTVLGSAADKHDLSGLTVPLRSHGGVSEQKVPLIFNRKLVGLDSPGRLRNFDIIDLALNHLA.

D25, T64, D202, H206, D241, H242, and H368 together coordinate Zn(2+). Substrate is bound by residues T64 and D202. Residues H242 and H368 each contribute to the substrate site.

Belongs to the alkaline phosphatase family. PhnA subfamily. As to quaternary structure, homodimer. It depends on Zn(2+) as a cofactor.

The enzyme catalyses phosphonoacetate + H2O = acetate + phosphate + H(+). Completely inhibited by EDTA and 1,10-phenanthroline. Moderately inhibited by the phosphonocarboxylic acids phosphonoformate and 3-phosphonopropionate and the phosphonate herbicide glyphosate. Partially inhibited by the reducing agents sodium sulfide and dithiotheitol and the chelating agent iminodiacetate. Nonphosphonate analogs of phosphonoacetate, such as arsonoacetate, sulfonoacetate and malonate are poor inhibitors. Inorganic phosphate, acetate and the known phosphonotase inhibitor phosphite have little effect on activity. Not inhibited by the alkylphosphonic acids methylphosphonate and ethylphosphonate, or the aminoalkylphosphonates 2-aminoethylphosphonate, 3-aminopropylphosphonate and 4-aminobutylphosphonate. Fe(3+), Ca(2+), Mg(2+) and Cs(+) have no effect on activity. Activity is slightly increased by the aminoalkylphosphonates 1-aminoethylphosphonate, 1-aminobutylphosphonate, 2-amino-4-butylphosphonate. Activity is increased by Zn(2+), Mn(2+) and Co(2+), these 3 metal ions also allow recovery of activity after EDTA treatment. Its function is as follows. Specifically hydrolyzes phosphonoacetate. Does not have activity on other organophosphonates or acetates. This is Phosphonoacetate hydrolase from Pseudomonas fluorescens.